The following is a 372-amino-acid chain: SAM domain-containing protein SAMSN-1 (372 aa).

The interval 1–71 is disordered; that stretch reads MLKRKPSNAS…SGGSLGKKVR (71 aa). The Important for interaction with 14-3-3 proteins signature appears at 20 to 25; sequence RSSSFG. Residues Ser23 and Ser34 each carry the phosphoserine modification. Over residues 37–49 the composition is skewed to basic and acidic residues; that stretch reads KSDDSIEVHDREL. Residues 52-63 show a composition bias toward low complexity; it reads GSEEQSKTSSSG. The residue at position 74 (Ser74) is a Phosphoserine. Thr76 bears the Phosphothreonine mark. 3 positions are modified to phosphoserine: Ser90, Ser97, and Ser119. The interval 90–111 is disordered; sequence SEEKEEESGEEALPYRNSDPMI. The span at 129–146 shows a compositional bias: low complexity; it reads LYSGQSSSSGITSCSDGT. Residues 129–153 form a disordered region; it reads LYSGQSSSSGITSCSDGTSNRDSFR. At Tyr160 the chain carries Phosphotyrosine. One can recognise an SH3 domain in the interval 163 to 224; the sequence is PFCGRAKVHT…KFIYVDVILE (62 aa). Residues 241 to 305 enclose the SAM domain; the sequence is ENHQTIQEFL…LSAAESLLDE (65 aa). The disordered stretch occupies residues 304–372; that stretch reads DEETTVEHEK…QKIAITESSD (69 aa). Positions 317 to 329 are enriched in polar residues; the sequence is PLSSNPDILSASQ.

Interacts with FASLG. Interacts with phosphotyrosine containing proteins. Interacts (via SH3 domain) with CTTN. Interacts (phosphorylated at Ser-23) with YWHAB, YWHAE, YWHAG, YWHAH, YWHAZ and SFN. Interacts directly with SAP30 and HDAC1. Identified in a complex with SAP30 and HDAC1. As to expression, detected in spleen and lymph node (at protein level).

It localises to the nucleus. The protein resides in the cytoplasm. The protein localises to the cell projection. Its subcellular location is the ruffle. In terms of biological role, negative regulator of B-cell activation. Down-regulates cell proliferation (in vitro). Promotes RAC1-dependent membrane ruffle formation and reorganization of the actin cytoskeleton. Regulates cell spreading and cell polarization. Stimulates HDAC1 activity. Regulates LYN activity by modulating its tyrosine phosphorylation. This is SAM domain-containing protein SAMSN-1 (Samsn1) from Mus musculus (Mouse).